The sequence spans 360 residues: Malate dehydrogenase (360 aa).

Belongs to the LDH2/MDH2 oxidoreductase family. In terms of assembly, homodimer.

Its subcellular location is the cytoplasm. The enzyme catalyses (S)-malate + NAD(+) = oxaloacetate + NADH + H(+). In Pyrococcus horikoshii (strain ATCC 700860 / DSM 12428 / JCM 9974 / NBRC 100139 / OT-3), this protein is Malate dehydrogenase (mdh).